Reading from the N-terminus, the 252-residue chain is TVP38/TMEM64 family membrane protein Mb1528c (252 aa).

The next 6 membrane-spanning stretches (helical) occupy residues 32–52 (IVGT…VPVP), 64–84 (LGAW…VPPF), 88–108 (AFTL…IAVV), 149–169 (WLAI…INYA), 177–197 (ILSF…AVVI), and 209–229 (LLIL…VYEI).

This sequence belongs to the TVP38/TMEM64 family.

The protein localises to the cell membrane. The protein is TVP38/TMEM64 family membrane protein Mb1528c of Mycobacterium bovis (strain ATCC BAA-935 / AF2122/97).